The chain runs to 159 residues: SsrA-binding protein (159 aa).

Residues 131–159 (KGKKLHDKRESEKERDWNRQKSRLLKDNG) are disordered. A compositionally biased stretch (basic and acidic residues) spans 137–159 (DKRESEKERDWNRQKSRLLKDNG).

Belongs to the SmpB family.

It is found in the cytoplasm. In terms of biological role, required for rescue of stalled ribosomes mediated by trans-translation. Binds to transfer-messenger RNA (tmRNA), required for stable association of tmRNA with ribosomes. tmRNA and SmpB together mimic tRNA shape, replacing the anticodon stem-loop with SmpB. tmRNA is encoded by the ssrA gene; the 2 termini fold to resemble tRNA(Ala) and it encodes a 'tag peptide', a short internal open reading frame. During trans-translation Ala-aminoacylated tmRNA acts like a tRNA, entering the A-site of stalled ribosomes, displacing the stalled mRNA. The ribosome then switches to translate the ORF on the tmRNA; the nascent peptide is terminated with the 'tag peptide' encoded by the tmRNA and targeted for degradation. The ribosome is freed to recommence translation, which seems to be the essential function of trans-translation. The chain is SsrA-binding protein from Rhizobium etli (strain CIAT 652).